A 52-amino-acid chain; its full sequence is Protein RepA (52 aa).

The segment at residues 20 to 40 (KLEELAQKYGMTKSGLVNFLV) is a DNA-binding region (H-T-H motif).

This sequence belongs to the transcriptional regulatory CopG/NikR family. Homodimer.

Functionally, regulates the plasmid copy number. RepA binds to the repAB promoter thus controlling the synthesis of the plasmid replication initiator protein RepB. The polypeptide is Protein RepA (repA) (Lactiplantibacillus plantarum (Lactobacillus plantarum)).